The sequence spans 151 residues: NADPH-dependent 7-cyano-7-deazaguanine reductase (151 aa).

Catalysis depends on Cys-51, which acts as the Thioimide intermediate. Asp-58 acts as the Proton donor in catalysis. Residues 73–75 (VES) and 92–93 (HE) each bind substrate.

It belongs to the GTP cyclohydrolase I family. QueF type 1 subfamily.

Its subcellular location is the cytoplasm. The catalysed reaction is 7-aminomethyl-7-carbaguanine + 2 NADP(+) = 7-cyano-7-deazaguanine + 2 NADPH + 3 H(+). It functions in the pathway tRNA modification; tRNA-queuosine biosynthesis. Functionally, catalyzes the NADPH-dependent reduction of 7-cyano-7-deazaguanine (preQ0) to 7-aminomethyl-7-deazaguanine (preQ1). This chain is NADPH-dependent 7-cyano-7-deazaguanine reductase, found in Bacteroides fragilis (strain YCH46).